The chain runs to 318 residues: tRNA pseudouridine synthase B (318 aa).

The active-site Nucleophile is Asp-54.

This sequence belongs to the pseudouridine synthase TruB family. Type 1 subfamily.

It catalyses the reaction uridine(55) in tRNA = pseudouridine(55) in tRNA. In terms of biological role, responsible for synthesis of pseudouridine from uracil-55 in the psi GC loop of transfer RNAs. The protein is tRNA pseudouridine synthase B of Ralstonia pickettii (strain 12J).